A 347-amino-acid polypeptide reads, in one-letter code: Eukaryotic translation initiation factor 3 subunit I (347 aa).

WD repeat units lie at residues 8-49, 50-89, 146-186, 198-237, 239-278, and 295-336; these read GHER…GTYE, GHNG…CLFT, TFSG…PESG, AHTD…VIKT, ATET…GRFE, and GHFG…SKLY.

It belongs to the eIF-3 subunit I family. In terms of assembly, component of the eukaryotic translation initiation factor 3 (eIF-3) complex.

It localises to the cytoplasm. In terms of biological role, component of the eukaryotic translation initiation factor 3 (eIF-3) complex, which is involved in protein synthesis of a specialized repertoire of mRNAs and, together with other initiation factors, stimulates binding of mRNA and methionyl-tRNAi to the 40S ribosome. The eIF-3 complex specifically targets and initiates translation of a subset of mRNAs involved in cell proliferation. This chain is Eukaryotic translation initiation factor 3 subunit I, found in Mycosarcoma maydis (Corn smut fungus).